The sequence spans 1259 residues: Neural cell adhesion molecule L1 (1259 aa).

The N-terminal stretch at 1 to 19 is a signal peptide; it reads MVMMLWYVLPLLLCSPCLL. Over 20 to 1122 the chain is Extracellular; it reads IQIPDEYKGH…VSTTGSFASE (1103 aa). Ig-like C2-type domains follow at residues 35–128, 138–225, 239–327, 332–419, 424–506, and 517–600; these read PVIT…HEIQ, PKET…EPID, PRLL…YYVT, PYWL…AYIY, PARI…NNVT, and TQIT…DEVE. Intrachain disulfides connect cysteine 57/cysteine 113 and cysteine 157/cysteine 208. Residues asparagine 100, asparagine 202, asparagine 246, and asparagine 293 are each glycosylated (N-linked (GlcNAc...) asparagine). Disulfide bonds link cysteine 263/cysteine 311 and cysteine 353/cysteine 403. Asparagine 432, asparagine 489, and asparagine 504 each carry an N-linked (GlcNAc...) asparagine glycan. A disulfide bond links cysteine 447 and cysteine 496. An intrachain disulfide couples cysteine 538 to cysteine 590. Short sequence motifs (cell attachment site) lie at residues 553–555 and 562–564; these read RGD. 5 Fibronectin type-III domains span residues 613-711, 716-809, 811-916, 919-1014, and 1016-1116; these read PVPH…TPEA, NPVD…SGED, PQVS…PEGV, HPEA…MALF, and KPDF…VSTT. Asparagine 670 carries an N-linked (GlcNAc...) asparagine glycan. The interval 697–724 is disordered; it reads GEPSPVSETVVTPEAAPEKNPVDVRGEG. Residues 712–724 are compositionally biased toward basic and acidic residues; the sequence is APEKNPVDVRGEG. Asparagine 725, asparagine 776, asparagine 824, asparagine 848, asparagine 875, asparagine 968, asparagine 978, asparagine 1021, asparagine 1029, asparagine 1072, and asparagine 1106 each carry an N-linked (GlcNAc...) asparagine glycan. The helical transmembrane segment at 1123-1145 threads the bilayer; that stretch reads GWFIAFVSAIILLLLILLILCFI. Over 1146-1259 the chain is Cytoplasmic; it reads KRSKGGKYSV…SPINPAVALE (114 aa). Phosphoserine is present on residues serine 1165, arginine 1179, serine 1180, serine 1183, serine 1196, serine 1245, serine 1246, and serine 1250. Disordered stretches follow at residues 1182-1209 and 1228-1259; these read ESDN…SDDS and IGQY…VALE. Residues 1243 to 1252 show a composition bias toward polar residues; it reads NDSSGATSPI.

The protein belongs to the immunoglobulin superfamily. L1/neurofascin/NgCAM family. In terms of assembly, interacts with SHTN1; the interaction occurs in axonal growth cones. Interacts with isoform 2 of BSG. As to expression, isoform 2 is predominantly found in the brain, while isoform 1 is found in the peripheral nervous system.

It is found in the cell membrane. The protein localises to the cell projection. The protein resides in the growth cone. In terms of biological role, neural cell adhesion molecule involved in the dynamics of cell adhesion and in the generation of transmembrane signals at tyrosine kinase receptors. During brain development, critical in multiple processes, including neuronal migration, axonal growth and fasciculation, and synaptogenesis. In the mature brain, plays a role in the dynamics of neuronal structure and function, including synaptic plasticity. In Rattus norvegicus (Rat), this protein is Neural cell adhesion molecule L1 (L1cam).